Consider the following 325-residue polypeptide: Beta-ketoacyl-[acyl-carrier-protein] synthase III (325 aa).

Active-site residues include Cys-112 and His-250. The segment at 251-255 (QANSR) is ACP-binding. Asn-280 is an active-site residue.

It belongs to the thiolase-like superfamily. FabH family. In terms of assembly, homodimer.

The protein localises to the cytoplasm. It carries out the reaction malonyl-[ACP] + acetyl-CoA + H(+) = 3-oxobutanoyl-[ACP] + CO2 + CoA. It functions in the pathway lipid metabolism; fatty acid biosynthesis. Its function is as follows. Catalyzes the condensation reaction of fatty acid synthesis by the addition to an acyl acceptor of two carbons from malonyl-ACP. Catalyzes the first condensation reaction which initiates fatty acid synthesis and may therefore play a role in governing the total rate of fatty acid production. Possesses both acetoacetyl-ACP synthase and acetyl transacylase activities. Its substrate specificity determines the biosynthesis of branched-chain and/or straight-chain of fatty acids. This Lactococcus lactis subsp. cremoris (strain MG1363) protein is Beta-ketoacyl-[acyl-carrier-protein] synthase III.